A 464-amino-acid chain; its full sequence is UDP-N-acetylmuramoylalanine--D-glutamate ligase (464 aa).

An ATP-binding site is contributed by 112–118 (GTDGKTT).

It belongs to the MurCDEF family.

The protein resides in the cytoplasm. It catalyses the reaction UDP-N-acetyl-alpha-D-muramoyl-L-alanine + D-glutamate + ATP = UDP-N-acetyl-alpha-D-muramoyl-L-alanyl-D-glutamate + ADP + phosphate + H(+). The protein operates within cell wall biogenesis; peptidoglycan biosynthesis. Cell wall formation. Catalyzes the addition of glutamate to the nucleotide precursor UDP-N-acetylmuramoyl-L-alanine (UMA). This Chlorobium chlorochromatii (strain CaD3) protein is UDP-N-acetylmuramoylalanine--D-glutamate ligase.